We begin with the raw amino-acid sequence, 749 residues long: Catalase-peroxidase 2 (749 aa).

The N-terminal stretch at 1 to 27 (MFKRTIPLFAAFTLAISPSIFPNYAHA) is a signal peptide. The tryptophyl-tyrosyl-methioninium (Trp-Tyr) (with M-255) cross-link spans 107–229 (WHAAGTYRIY…LAATVMGLIY (123 aa)). His-108 serves as the catalytic Proton acceptor. The tryptophyl-tyrosyl-methioninium (Tyr-Met) (with W-107) cross-link spans 229 to 255 (YVNPEGPNGVPDPLAAAEKIRETFGRM). Residue His-270 participates in heme b binding.

This sequence belongs to the peroxidase family. Peroxidase/catalase subfamily. Homodimer or homotetramer. Heme b is required as a cofactor. Post-translationally, formation of the three residue Trp-Tyr-Met cross-link is important for the catalase, but not the peroxidase activity of the enzyme.

The enzyme catalyses H2O2 + AH2 = A + 2 H2O. The catalysed reaction is 2 H2O2 = O2 + 2 H2O. Its function is as follows. Bifunctional enzyme with both catalase and broad-spectrum peroxidase activity. This is Catalase-peroxidase 2 from Legionella pneumophila (strain Lens).